Reading from the N-terminus, the 302-residue chain is Ornithine carbamoyltransferase (302 aa).

Carbamoyl phosphate is bound by residues 52–55, glutamine 79, arginine 103, and 130–133; these read STRT and HPCQ. L-ornithine contacts are provided by residues asparagine 161, aspartate 221, and 225–226; that span reads SM. Carbamoyl phosphate contacts are provided by residues 261–262 and arginine 289; that span reads CL.

The protein belongs to the aspartate/ornithine carbamoyltransferase superfamily. OTCase family.

It is found in the cytoplasm. The enzyme catalyses carbamoyl phosphate + L-ornithine = L-citrulline + phosphate + H(+). It participates in amino-acid biosynthesis; L-arginine biosynthesis; L-arginine from L-ornithine and carbamoyl phosphate: step 1/3. Reversibly catalyzes the transfer of the carbamoyl group from carbamoyl phosphate (CP) to the N(epsilon) atom of ornithine (ORN) to produce L-citrulline. The chain is Ornithine carbamoyltransferase from Methanosarcina acetivorans (strain ATCC 35395 / DSM 2834 / JCM 12185 / C2A).